The sequence spans 506 residues: Bifunctional purine biosynthesis protein PurH (506 aa).

The MGS-like domain occupies 1–142 (MRAIISVYRK…KNFFRVVILV (142 aa)).

The protein belongs to the PurH family.

The enzyme catalyses (6R)-10-formyltetrahydrofolate + 5-amino-1-(5-phospho-beta-D-ribosyl)imidazole-4-carboxamide = 5-formamido-1-(5-phospho-D-ribosyl)imidazole-4-carboxamide + (6S)-5,6,7,8-tetrahydrofolate. The catalysed reaction is IMP + H2O = 5-formamido-1-(5-phospho-D-ribosyl)imidazole-4-carboxamide. It participates in purine metabolism; IMP biosynthesis via de novo pathway; 5-formamido-1-(5-phospho-D-ribosyl)imidazole-4-carboxamide from 5-amino-1-(5-phospho-D-ribosyl)imidazole-4-carboxamide (10-formyl THF route): step 1/1. Its pathway is purine metabolism; IMP biosynthesis via de novo pathway; IMP from 5-formamido-1-(5-phospho-D-ribosyl)imidazole-4-carboxamide: step 1/1. The chain is Bifunctional purine biosynthesis protein PurH from Aquifex aeolicus (strain VF5).